Here is a 1349-residue protein sequence, read N- to C-terminus: Patatin-like phospholipase domain-containing protein 7 (1349 aa).

Topologically, residues 1 to 36 (MQKEEDVCPEAGYCLGTALSSWGLHFMEEHSQSTML) are lumenal. Residues 37-57 (MGIGIGVLLTLAFVGLAAFFV) form a helical membrane-spanning segment. Over 58 to 1349 (YRKVSRFRRA…DQGPRLYRPS (1292 aa)) the chain is Cytoplasmic. 170-297 (VLGHFEKPLF…VRVVQIIMVR (128 aa)) is an a nucleoside 3',5'-cyclic phosphate binding site. The interval 340–361 (MSYGPEEQLERSPRLSEFNSSD) is disordered. A phosphoserine mark is found at serine 341 and serine 377. Residues 496–599 (FLHV…VVRR) and 610–715 (ALDW…LGEK) each bind a nucleoside 3',5'-cyclic phosphate. Residues 678-964 (VHAVRDSELA…RGCAQVGILR (287 aa)) form an involved in the binding to lipid droplets region. The PNPLA domain occupies 947-1113 (LVLGGGGARG…INNLPADVAR (167 aa)). The GXGXXG motif lies at 951-956 (GGGARG). The GXSXG motif lies at 978–982 (GTSIG). Serine 980 functions as the Nucleophile in the catalytic mechanism. Aspartate 1100 serves as the catalytic Proton acceptor. Residues 1100 to 1102 (DGG) carry the DGA/G motif. Phosphoserine is present on serine 1277. Phosphothreonine is present on threonine 1281. Residues 1297–1349 (DFQSTGIELDSDSECEPSMSQGPHSLTSPKQSQDSFPWLPNQDDQGPRLYRPS) are disordered. The span at 1314-1331 (SMSQGPHSLTSPKQSQDS) shows a compositional bias: polar residues.

The protein belongs to the NTE family. As to expression, expressed in the brain, liver, kidney, lung and testis.

Its subcellular location is the endoplasmic reticulum membrane. The protein localises to the lipid droplet. The catalysed reaction is a 1-acyl-sn-glycero-3-phosphocholine + H2O = sn-glycerol 3-phosphocholine + a fatty acid + H(+). The enzyme catalyses 1-(9Z-octadecenoyl)-sn-glycero-3-phosphocholine + H2O = sn-glycerol 3-phosphocholine + (9Z)-octadecenoate + H(+). It catalyses the reaction 1-(9Z-octadecenoyl)-sn-glycero-3-phosphoethanolamine + H2O = sn-glycero-3-phosphoethanolamine + (9Z)-octadecenoate + H(+). It carries out the reaction 1-(9Z-octadecenoyl)-sn-glycero-3-phospho-L-serine + H2O = sn-glycero-3-phospho-L-serine + (9Z)-octadecenoate + H(+). The catalysed reaction is 1-hexadecanoyl-sn-glycero-3-phosphocholine + H2O = sn-glycerol 3-phosphocholine + hexadecanoate + H(+). The enzyme catalyses 1-hexadecanoyl-sn-glycero-3-phosphate + H2O = sn-glycerol 3-phosphate + hexadecanoate + H(+). Lysophospholipase which preferentially deacylates unsaturated lysophosphatidylcholine (C18:1), generating glycerophosphocholine. Also can deacylate, to a lesser extent, lysophosphatidylethanolamine (C18:1), lysophosphatidyl-L-serine (C18:1) and lysophosphatidic acid (C16:0). The protein is Patatin-like phospholipase domain-containing protein 7 (Pnpla7) of Rattus norvegicus (Rat).